Consider the following 232-residue polypeptide: Orotate phosphoribosyltransferase (232 aa).

5-phospho-alpha-D-ribose 1-diphosphate is bound by residues Arg107, Lys108, Lys111, and Glu133–Ser141. Orotate is bound at residue Thr137.

The protein belongs to the purine/pyrimidine phosphoribosyltransferase family. PyrE subfamily. As to quaternary structure, homodimer. Requires Mg(2+) as cofactor.

The enzyme catalyses orotidine 5'-phosphate + diphosphate = orotate + 5-phospho-alpha-D-ribose 1-diphosphate. It participates in pyrimidine metabolism; UMP biosynthesis via de novo pathway; UMP from orotate: step 1/2. Catalyzes the transfer of a ribosyl phosphate group from 5-phosphoribose 1-diphosphate to orotate, leading to the formation of orotidine monophosphate (OMP). The polypeptide is Orotate phosphoribosyltransferase (Cereibacter sphaeroides (strain ATCC 17023 / DSM 158 / JCM 6121 / CCUG 31486 / LMG 2827 / NBRC 12203 / NCIMB 8253 / ATH 2.4.1.) (Rhodobacter sphaeroides)).